Here is a 200-residue protein sequence, read N- to C-terminus: Recombination protein RecR (200 aa).

A C4-type zinc finger spans residues C57–C72. Positions G81–P176 constitute a Toprim domain.

It belongs to the RecR family.

Functionally, may play a role in DNA repair. It seems to be involved in an RecBC-independent recombinational process of DNA repair. It may act with RecF and RecO. This is Recombination protein RecR from Actinobacillus succinogenes (strain ATCC 55618 / DSM 22257 / CCUG 43843 / 130Z).